A 65-amino-acid polypeptide reads, in one-letter code: Large ribosomal subunit protein bL35 (65 aa).

This sequence belongs to the bacterial ribosomal protein bL35 family.

This chain is Large ribosomal subunit protein bL35, found in Aeromonas hydrophila subsp. hydrophila (strain ATCC 7966 / DSM 30187 / BCRC 13018 / CCUG 14551 / JCM 1027 / KCTC 2358 / NCIMB 9240 / NCTC 8049).